A 94-amino-acid chain; its full sequence is Co-chaperonin GroES (94 aa).

This sequence belongs to the GroES chaperonin family. As to quaternary structure, heptamer of 7 subunits arranged in a ring. Interacts with the chaperonin GroEL.

The protein localises to the cytoplasm. Functionally, together with the chaperonin GroEL, plays an essential role in assisting protein folding. The GroEL-GroES system forms a nano-cage that allows encapsulation of the non-native substrate proteins and provides a physical environment optimized to promote and accelerate protein folding. GroES binds to the apical surface of the GroEL ring, thereby capping the opening of the GroEL channel. This is Co-chaperonin GroES from Listeria monocytogenes serotype 4b (strain CLIP80459).